The primary structure comprises 136 residues: Large ribosomal subunit protein uL16 (136 aa).

This sequence belongs to the universal ribosomal protein uL16 family. In terms of assembly, part of the 50S ribosomal subunit.

Its function is as follows. Binds 23S rRNA and is also seen to make contacts with the A and possibly P site tRNAs. In Elusimicrobium minutum (strain Pei191), this protein is Large ribosomal subunit protein uL16.